The chain runs to 215 residues: Probable transaldolase (215 aa).

The active-site Schiff-base intermediate with substrate is Lys-83.

This sequence belongs to the transaldolase family. Type 3B subfamily.

The protein resides in the cytoplasm. The enzyme catalyses D-sedoheptulose 7-phosphate + D-glyceraldehyde 3-phosphate = D-erythrose 4-phosphate + beta-D-fructose 6-phosphate. It functions in the pathway carbohydrate degradation; pentose phosphate pathway; D-glyceraldehyde 3-phosphate and beta-D-fructose 6-phosphate from D-ribose 5-phosphate and D-xylulose 5-phosphate (non-oxidative stage): step 2/3. Functionally, transaldolase is important for the balance of metabolites in the pentose-phosphate pathway. This chain is Probable transaldolase, found in Pelotomaculum thermopropionicum (strain DSM 13744 / JCM 10971 / SI).